Reading from the N-terminus, the 692-residue chain is FMR1-interacting protein NUFIP2 (692 aa).

Residues 1 to 100 (MEEKPGQPQP…KKTGYGEING (100 aa)) are disordered. Composition is skewed to basic residues over residues 11–23 (QHHH…HHHP) and 31–54 (SHHH…HHQQ). A Glycyl lysine isopeptide (Lys-Gly) (interchain with G-Cter in SUMO2) cross-link involves residue lysine 79. At threonine 88 the chain carries Phosphothreonine. Lysine 110 participates in a covalent cross-link: Glycyl lysine isopeptide (Lys-Gly) (interchain with G-Cter in SUMO2). Phosphoserine is present on residues serine 113 and serine 114. Glycyl lysine isopeptide (Lys-Gly) (interchain with G-Cter in SUMO2) cross-links involve residues lysine 137, lysine 147, lysine 158, and lysine 172. A disordered region spans residues 205–233 (SKGADNDGSGSESGYTTPKKRKARRNSAK). Serine 213 and serine 215 each carry phosphoserine. Tyrosine 219 is subject to Phosphotyrosine. Phosphothreonine is present on residues threonine 220 and threonine 221. The span at 222–231 (PKKRKARRNS) shows a compositional bias: basic residues. Glycyl lysine isopeptide (Lys-Gly) (interchain with G-Cter in SUMO2) cross-links involve residues lysine 262 and lysine 281. Disordered stretches follow at residues 277-337 (KPIW…WTLF) and 369-401 (TVQN…SQVP). Position 291 is an omega-N-methylarginine (arginine 291). Residue lysine 293 forms a Glycyl lysine isopeptide (Lys-Gly) (interchain with G-Cter in SUMO2) linkage. At serine 304 the chain carries Phosphoserine. Lysine 307 is covalently cross-linked (Glycyl lysine isopeptide (Lys-Gly) (interchain with G-Cter in SUMO2)). Residues 371-395 (QNSSVSPSSSSSSSSTGETQTQSSS) are compositionally biased toward low complexity. Serine 376 carries the post-translational modification Phosphoserine. Residue threonine 569 is modified to Phosphothreonine. 4 positions are modified to phosphoserine: serine 570, serine 589, serine 605, and serine 626. Residue threonine 630 is modified to Phosphothreonine. Phosphoserine is present on residues serine 634, serine 649, serine 652, and serine 689.

Interacts with FMR1 (via N-terminus). Interacts with DDX6.

Its subcellular location is the nucleus. It localises to the cytoplasm. It is found in the stress granule. Its function is as follows. Binds RNA. This chain is FMR1-interacting protein NUFIP2 (Nufip2), found in Mus musculus (Mouse).